A 436-amino-acid chain; its full sequence is Trigger factor (436 aa).

In terms of domain architecture, PPIase FKBP-type spans 164–249; that stretch reads GDTVVIDYKG…IHEIKEKQLP (86 aa).

Belongs to the FKBP-type PPIase family. Tig subfamily.

The protein localises to the cytoplasm. It carries out the reaction [protein]-peptidylproline (omega=180) = [protein]-peptidylproline (omega=0). Its function is as follows. Involved in protein export. Acts as a chaperone by maintaining the newly synthesized protein in an open conformation. Functions as a peptidyl-prolyl cis-trans isomerase. The chain is Trigger factor from Limosilactobacillus reuteri (strain DSM 20016) (Lactobacillus reuteri).